Reading from the N-terminus, the 430-residue chain is Ribosomal protein uS12 methylthiotransferase RimO (430 aa).

The MTTase N-terminal domain occupies 2 to 119; it reads ISVYSISLGC…WPAMLAHALK (118 aa). Residues C11, C46, C81, C145, C149, and C152 each coordinate [4Fe-4S] cluster. Positions 131–361 constitute a Radical SAM core domain; sequence STGPSYAWLK…MEVQAEISEE (231 aa). The TRAM domain occupies 364-430; it reads AVHEGTRQQV…TRTYDLVALV (67 aa).

This sequence belongs to the methylthiotransferase family. RimO subfamily. [4Fe-4S] cluster serves as cofactor.

The protein localises to the cytoplasm. The enzyme catalyses L-aspartate(89)-[ribosomal protein uS12]-hydrogen + (sulfur carrier)-SH + AH2 + 2 S-adenosyl-L-methionine = 3-methylsulfanyl-L-aspartate(89)-[ribosomal protein uS12]-hydrogen + (sulfur carrier)-H + 5'-deoxyadenosine + L-methionine + A + S-adenosyl-L-homocysteine + 2 H(+). Catalyzes the methylthiolation of an aspartic acid residue of ribosomal protein uS12. In Nitratidesulfovibrio vulgaris (strain DP4) (Desulfovibrio vulgaris), this protein is Ribosomal protein uS12 methylthiotransferase RimO.